The sequence spans 542 residues: ATP synthase subunit beta (542 aa).

Positions 1–50 are enriched in low complexity; it reads MAKTPAKAPAAAAKPAAVKKPAAPKAAAAPKAAAVATPAAKKPAAPKAAP. Residues 1 to 61 form a disordered region; it reads MAKTPAKAPA…SKVAGTREKP (61 aa). Position 216–223 (216–223) interacts with ATP; the sequence is GGAGVGKT.

Belongs to the ATPase alpha/beta chains family. F-type ATPases have 2 components, CF(1) - the catalytic core - and CF(0) - the membrane proton channel. CF(1) has five subunits: alpha(3), beta(3), gamma(1), delta(1), epsilon(1). CF(0) has three main subunits: a(1), b(2) and c(9-12). The alpha and beta chains form an alternating ring which encloses part of the gamma chain. CF(1) is attached to CF(0) by a central stalk formed by the gamma and epsilon chains, while a peripheral stalk is formed by the delta and b chains.

It localises to the cell inner membrane. The catalysed reaction is ATP + H2O + 4 H(+)(in) = ADP + phosphate + 5 H(+)(out). Functionally, produces ATP from ADP in the presence of a proton gradient across the membrane. The catalytic sites are hosted primarily by the beta subunits. This Caulobacter sp. (strain K31) protein is ATP synthase subunit beta.